Reading from the N-terminus, the 477-residue chain is Protein kinase C and casein kinase substrate in neurons protein 2 (477 aa).

Positions 11 to 282 (VEVSSDSFWE…AIKSADAMED (272 aa)) constitute an F-BAR domain. Positions 25 to 274 (KRTVKRIDDG…SIYRELEYAI (250 aa)) form a coiled coil. Composition is skewed to basic and acidic residues over residues 163–176 (CKEEKLATSRETNS) and 186–216 (QLKKLQDKVEKSKQDSQKTKEKYEKSLKDLD). Disordered regions lie at residues 163–218 (CKEE…LDGT) and 314–412 (RREK…PFDE). Residues 328–341 (GISQSGEQSSIQNQ) are compositionally biased toward low complexity. The segment covering 342 to 357 (HSSHLSVQSAQSTNNP) has biased composition (polar residues). Residues 356–358 (NPF) carry the NPF1 motif. The span at 370–388 (TENKKIENVGSYEKTHPAE) shows a compositional bias: basic and acidic residues. The span at 395 to 407 (NNPFNPSDTNGDN) shows a compositional bias: polar residues. An NPF2 motif is present at residues 396-398 (NPF). Positions 408 to 410 (NPF) match the NPF3 motif. The region spanning 417 to 477 (TLEVRVRALY…YPANYVESVQ (61 aa)) is the SH3 domain.

This sequence belongs to the PACSIN family. Interacts with adam13 through the SH3 domains. Phosphorylated. Ubiquitously expressed with higher expression in the ectoderm, the neuroectoderm, and dorsal mesoderm layers.

It is found in the cytoplasm. The protein localises to the cytoskeleton. The protein resides in the cytoplasmic vesicle membrane. Its subcellular location is the cell projection. It localises to the ruffle membrane. It is found in the early endosome. The protein localises to the recycling endosome membrane. The protein resides in the cell membrane. Its subcellular location is the membrane. It localises to the caveola. It is found in the cell junction. The protein localises to the adherens junction. In terms of biological role, regulates the morphogenesis and endocytosis of caveolae. Lipid-binding protein that is able to promote the tubulation of the phosphatidic acid-containing membranes it preferentially binds. Plays a role in intracellular vesicle-mediated transport. Involved in the endocytosis of cell-surface receptors like the EGF receptor, contributing to its internalization in the absence of EGF stimulus. The protein is Protein kinase C and casein kinase substrate in neurons protein 2 (pacsin2) of Xenopus laevis (African clawed frog).